A 212-amino-acid chain; its full sequence is Ras-related protein Rab-15 (212 aa).

Serine 17, glycine 18, valine 19, glycine 20, lysine 21, threonine 22, cysteine 23, serine 35, serine 39, and threonine 40 together coordinate GTP. Residue threonine 22 coordinates Mg(2+). 2 short sequence motifs (switch) span residues asparagine 31 to phenylalanine 45 and aspartate 63 to arginine 80. Mg(2+)-binding residues include threonine 40 and aspartate 63. Glycine 66, asparagine 121, lysine 122, aspartate 124, serine 151, and alanine 152 together coordinate GTP. A disordered region spans residues glutamate 192 to cysteine 212. 2 S-geranylgeranyl cysteine lipidation sites follow: cysteine 210 and cysteine 212. Residue cysteine 212 is modified to Cysteine methyl ester.

Belongs to the small GTPase superfamily. Rab family. In terms of assembly, the GTP bound form of RAB15 interacts with REP15. Interacts (GTP-bound form) with MICAL1, MICAL3, MICALCL, EHBP1 and EHBP1L1. Requires Mg(2+) as cofactor.

The protein resides in the cell membrane. The catalysed reaction is GTP + H2O = GDP + phosphate + H(+). With respect to regulation, regulated by guanine nucleotide exchange factors (GEFs) which promote the exchange of bound GDP for free GTP. Regulated by GTPase activating proteins (GAPs) which increase the GTP hydrolysis activity. Inhibited by GDP dissociation inhibitors (GDIs). In terms of biological role, the small GTPases Rab are key regulators of intracellular membrane trafficking, from the formation of transport vesicles to their fusion with membranes. Rabs cycle between an inactive GDP-bound form and an active GTP-bound form that is able to recruit to membranes different sets of downstream effectors directly responsible for vesicle formation, movement, tethering and fusion. RAB15 may act in concert with RAB3A in regulating aspects of synaptic vesicle membrane flow within the nerve terminal. This Mus musculus (Mouse) protein is Ras-related protein Rab-15.